The chain runs to 398 residues: MALKLHHTAFNPSMAVTSSGLPRSYHLRSHRVFMASSTIGITSKEIPNAKKPHMPPREAHVQKTHSMPPQKIEIFKSLEGWAEENVLVHLKPVEKCWQPQDFLPDPASEGFMDQVKELRERTKEIPDEYLVVLVGDMITEEALPTYQTMLNTLDGVRDETGASLTSWAIWTRAWTAEENRHGDLLNKYLYLTGRVDMKQIEKTIQYLIGSGMDPRSENNPYLGFIYTSFQERATFISHGNTARLAKDHGDFQLAQVCGIIAADEKRHETAYTKIVEKLFEIDPDGAVLALADMMRKKVSMPAHLMYDGKDDNLFENYSAVAQQIGVYTAKDYADILEHLVNRWKVENLMGLSGEGHKAQDFVCGLAPRIRKLGERAQSLSKPVSLVPFSWIFNKELKV.

A chloroplast-targeting transit peptide spans 1–34 (MALKLHHTAFNPSMAVTSSGLPRSYHLRSHRVFM). Residues 46–66 (IPNAKKPHMPPREAHVQKTHS) are disordered. Glu-140, Glu-178, His-181, Glu-231, Glu-264, and His-267 together coordinate Fe cation.

Belongs to the fatty acid desaturase type 2 family. In terms of assembly, homodimer. Fe(2+) is required as a cofactor.

The protein localises to the plastid. It is found in the chloroplast. It carries out the reaction octadecanoyl-[ACP] + 2 reduced [2Fe-2S]-[ferredoxin] + O2 + 2 H(+) = (9Z)-octadecenoyl-[ACP] + 2 oxidized [2Fe-2S]-[ferredoxin] + 2 H2O. Its pathway is lipid metabolism; fatty acid metabolism. In terms of biological role, converts stearoyl-ACP to oleoyl-ACP by introduction of a cis double bond between carbons 9 and 10 of the acyl chain. The sequence is that of Stearoyl-[acyl-carrier-protein] 9-desaturase, chloroplastic from Simmondsia chinensis (Jojoba).